The sequence spans 316 residues: Aspartate carbamoyltransferase catalytic subunit (316 aa).

The carbamoyl phosphate site is built by arginine 56 and threonine 57. Residue lysine 84 coordinates L-aspartate. Carbamoyl phosphate is bound by residues arginine 106, histidine 139, and glutamine 142. L-aspartate-binding residues include arginine 172 and arginine 226. Carbamoyl phosphate contacts are provided by glycine 267 and proline 268.

Belongs to the aspartate/ornithine carbamoyltransferase superfamily. ATCase family. As to quaternary structure, heterododecamer (2C3:3R2) of six catalytic PyrB chains organized as two trimers (C3), and six regulatory PyrI chains organized as three dimers (R2).

The enzyme catalyses carbamoyl phosphate + L-aspartate = N-carbamoyl-L-aspartate + phosphate + H(+). Its pathway is pyrimidine metabolism; UMP biosynthesis via de novo pathway; (S)-dihydroorotate from bicarbonate: step 2/3. Functionally, catalyzes the condensation of carbamoyl phosphate and aspartate to form carbamoyl aspartate and inorganic phosphate, the committed step in the de novo pyrimidine nucleotide biosynthesis pathway. This chain is Aspartate carbamoyltransferase catalytic subunit, found in Mycobacterium sp. (strain MCS).